We begin with the raw amino-acid sequence, 395 residues long: Torsin-3A (395 aa).

Positions M1–G24 are cleaved as a signal peptide. Residue N120 is glycosylated (N-linked (GlcNAc...) asparagine). G165 to N172 serves as a coordination point for ATP.

Belongs to the ClpA/ClpB family. Torsin subfamily. As to quaternary structure, may not form homohexamers. In terms of processing, N-glycosylated.

Its subcellular location is the cytoplasm. The protein resides in the endoplasmic reticulum lumen. This chain is Torsin-3A (Tor3a), found in Rattus norvegicus (Rat).